The sequence spans 564 residues: Septation ring formation regulator EzrA (564 aa).

Topologically, residues 1–4 are extracellular; sequence MVLY. The chain crosses the membrane as a helical span at residues 5–23; the sequence is IILAIIVIILIAVGVLFYL. The Cytoplasmic segment spans residues 24 to 564; it reads RSNKRQIIEK…KHIEEEVIKQ (541 aa). Coiled-coil stretches lie at residues 99–138, 190–223, 271–300, 350–435, and 471–550; these read SFNA…YKDN, DGNY…LIRE, LISR…LIEH, VRQF…RRLL, and VKQL…ESVE.

This sequence belongs to the EzrA family.

Its subcellular location is the cell membrane. In terms of biological role, negative regulator of FtsZ ring formation; modulates the frequency and position of FtsZ ring formation. Inhibits FtsZ ring formation at polar sites. Interacts either with FtsZ or with one of its binding partners to promote depolymerization. The chain is Septation ring formation regulator EzrA from Staphylococcus aureus (strain Mu3 / ATCC 700698).